A 125-amino-acid chain; its full sequence is Probable mercury resistance operon repressor (125 aa).

Residues 15–109 form the HTH arsR-type domain; sequence VPCTHPDTTA…LARCLAADNA (95 aa). Positions 49 to 68 form a DNA-binding region, H-T-H motif; it reads SAECVEHAGISQPRVSVHLS. Hg(2+) is bound by residues C69, C73, and C114.

Negatively regulates the mercuric reductase merA and the organolyase merB in the absence of mercuric ions. This Streptomyces lividans protein is Probable mercury resistance operon repressor (merR).